The following is a 456-amino-acid chain: Alcohol acyltransferase 16 (456 aa).

Catalysis depends on proton acceptor residues His-167 and Asp-382.

This sequence belongs to the plant acyltransferase family. In terms of tissue distribution, expressed in fruit.

It catalyses the reaction 3-(methylsulfanyl)propanoyl-CoA + butan-1-ol = butyl 3-(methylsulfanyl)propanoate + CoA. The enzyme catalyses ethanol + benzoyl-CoA = ethyl benzoate + CoA. The catalysed reaction is butan-1-ol + benzoyl-CoA = butyl benzoate + CoA. It carries out the reaction 2-(methylsulfanyl)acetyl-CoA + butan-1-ol = butyl 2-(methylsulfanyl)acetate + CoA. Its function is as follows. Involved in the biosynthesis of volatile esters which confer kiwifruit flavor. Alcohol acyl transferase that can use a wide range of alcohols as substrate to produce esters. Exhibits benzoyl-CoA:alcohol O-acyltransferase activity. The polypeptide is Alcohol acyltransferase 16 (Actinidia chinensis var. chinensis (Chinese soft-hair kiwi)).